A 300-amino-acid polypeptide reads, in one-letter code: Large ribosomal subunit protein uL18 (300 aa).

A compositionally biased stretch (basic and acidic residues) spans 246–267 (NIRSDPKRDRKPKKDVSKEPKR). The interval 246-276 (NIRSDPKRDRKPKKDVSKEPKRWNAKKLTNA) is disordered.

This sequence belongs to the universal ribosomal protein uL18 family. In terms of assembly, component of the large ribosomal subunit (LSU).

The protein localises to the cytoplasm. The protein resides in the nucleus. In terms of biological role, component of the ribosome, a large ribonucleoprotein complex responsible for the synthesis of proteins in the cell. The small ribosomal subunit (SSU) binds messenger RNAs (mRNAs) and translates the encoded message by selecting cognate aminoacyl-transfer RNA (tRNA) molecules. The large subunit (LSU) contains the ribosomal catalytic site termed the peptidyl transferase center (PTC), which catalyzes the formation of peptide bonds, thereby polymerizing the amino acids delivered by tRNAs into a polypeptide chain. The nascent polypeptides leave the ribosome through a tunnel in the LSU and interact with protein factors that function in enzymatic processing, targeting, and the membrane insertion of nascent chains at the exit of the ribosomal tunnel. The polypeptide is Large ribosomal subunit protein uL18 (RpL5) (Toxoptera citricida (Brown citrus aphid)).